The chain runs to 364 residues: Aminomethyltransferase (364 aa).

This sequence belongs to the GcvT family. As to quaternary structure, the glycine cleavage system is composed of four proteins: P, T, L and H.

The catalysed reaction is N(6)-[(R)-S(8)-aminomethyldihydrolipoyl]-L-lysyl-[protein] + (6S)-5,6,7,8-tetrahydrofolate = N(6)-[(R)-dihydrolipoyl]-L-lysyl-[protein] + (6R)-5,10-methylene-5,6,7,8-tetrahydrofolate + NH4(+). The glycine cleavage system catalyzes the degradation of glycine. The sequence is that of Aminomethyltransferase from Shigella dysenteriae serotype 1 (strain Sd197).